Consider the following 181-residue polypeptide: MMRNFIVVVNILALTLPFLAAEIQNPDSNCRGEKNDIVYDEQRVLYTPVRSVLNFNQYEPNYYHYRPSLPATASPYMYYPLVVRLLLLRSPAPISKWQSMPNFPQSAGVPYAIPNPSFLAMPTNENQDNTAIPTIDPITPIVSTPVPTMESIVNTVANPEASTVSINTPETTTVPVSSTAA.

The first 21 residues, 1-21 (MMRNFIVVVNILALTLPFLAA), serve as a signal peptide directing secretion. A Phosphothreonine modification is found at Thr-123. Thr-134, Thr-144, and Thr-155 each carry an O-linked (GalNAc...) threonine glycan. A Phosphoserine; alternate modification is found at Ser-162. O-linked (GalNAc...) serine; alternate glycosylation is present at Ser-162. Phosphoserine is present on Ser-178.

This sequence belongs to the kappa-casein family. Mammary gland specific. Secreted in milk.

The protein localises to the secreted. In terms of biological role, kappa-casein stabilizes micelle formation, preventing casein precipitation in milk. This is Kappa-casein (Csn3) from Mus musculus (Mouse).